The following is a 361-amino-acid chain: Peptide chain release factor 1 (361 aa).

At Q235 the chain carries N5-methylglutamine.

This sequence belongs to the prokaryotic/mitochondrial release factor family. Post-translationally, methylated by PrmC. Methylation increases the termination efficiency of RF1.

The protein localises to the cytoplasm. In terms of biological role, peptide chain release factor 1 directs the termination of translation in response to the peptide chain termination codons UAG and UAA. In Buchnera aphidicola subsp. Acyrthosiphon pisum (strain 5A), this protein is Peptide chain release factor 1.